Here is a 285-residue protein sequence, read N- to C-terminus: MRLIIVSGRSGSGKSTALNVLEDNGFYCIDNLPAGLLPELAERALLHTELLHPQVAVSIDARNLPSQLKRFPELLEEVRARHIQCDVLYLDADDETLLKRFSETRRRHPLTNESRSLAEAIRDEELLLAAIIDHADLKIDTTHLNLYQLRDMLKLRLLNKPEPGTAFLIESFGFKRGMPVDADLVFDVRCLPNPYWKAELRDFSGLDQPVIDYLAAQPDVEEMFQDIHAYLNKWLPRFAASNRAYVTIAIGCTGGHHRSVYLAERLGLALKEPLKNLQVRHRDLA.

ATP is bound at residue 8-15 (GRSGSGKS). GTP is bound at residue 60–63 (DARN).

It belongs to the RapZ-like family.

In terms of biological role, displays ATPase and GTPase activities. In Stutzerimonas stutzeri (Pseudomonas stutzeri), this protein is Nucleotide-binding protein in ptsN-ptsO intergenic region.